A 374-amino-acid chain; its full sequence is LIM domain-binding protein 1-A (374 aa).

Disordered stretches follow at residues 1–24 (MLDRDVGPTPMYPPSYMEPGIGRH), 249–297 (PPAE…ALSS), and 322–374 (TRLE…QSSQ). A compositionally biased stretch (low complexity) spans 267–297 (SGGSTMSSGGGNNNNSNSKKKSPASSFALSS). Residues 299-338 (DVMVVGEPTLMGGEFGDEDERLITRLENTQFDAANGIDDE) form the LIM interaction domain (LID) domain. Over residues 341 to 374 (FNSSPTMGTNSPWNSKAPSSQQGKNDNPSSQSSQ) the composition is skewed to polar residues.

Belongs to the LDB family. As to expression, expressed ubiquitously in the embryo and adult.

The protein resides in the nucleus. Its function is as follows. Binds to the LIM domain of a wide variety of LIM domain-containing transcription factors. This is LIM domain-binding protein 1-A (ldb1a) from Danio rerio (Zebrafish).